A 96-amino-acid chain; its full sequence is NADH-ubiquinone oxidoreductase chain 4L (96 aa).

Transmembrane regions (helical) follow at residues 1-21 (MPTT…SLQR), 27-47 (LLLT…LWAL), and 57-77 (APLI…SLMI).

It belongs to the complex I subunit 4L family.

The protein resides in the mitochondrion membrane. It catalyses the reaction a ubiquinone + NADH + 5 H(+)(in) = a ubiquinol + NAD(+) + 4 H(+)(out). Core subunit of the mitochondrial membrane respiratory chain NADH dehydrogenase (Complex I) which catalyzes electron transfer from NADH through the respiratory chain, using ubiquinone as an electron acceptor. Part of the enzyme membrane arm which is embedded in the lipid bilayer and involved in proton translocation. The sequence is that of NADH-ubiquinone oxidoreductase chain 4L (MT-ND4L) from Petromyzon marinus (Sea lamprey).